A 171-amino-acid chain; its full sequence is S-ribosylhomocysteine lyase (171 aa).

Residues H54, H58, and C128 each contribute to the Fe cation site.

The protein belongs to the LuxS family. As to quaternary structure, homodimer. The cofactor is Fe cation.

The enzyme catalyses S-(5-deoxy-D-ribos-5-yl)-L-homocysteine = (S)-4,5-dihydroxypentane-2,3-dione + L-homocysteine. Its function is as follows. Involved in the synthesis of autoinducer 2 (AI-2) which is secreted by bacteria and is used to communicate both the cell density and the metabolic potential of the environment. The regulation of gene expression in response to changes in cell density is called quorum sensing. Catalyzes the transformation of S-ribosylhomocysteine (RHC) to homocysteine (HC) and 4,5-dihydroxy-2,3-pentadione (DPD). The polypeptide is S-ribosylhomocysteine lyase (Escherichia coli O81 (strain ED1a)).